The chain runs to 109 residues: Nucleoid-associated protein Sama_1311 (109 aa).

Belongs to the YbaB/EbfC family. As to quaternary structure, homodimer.

The protein localises to the cytoplasm. It is found in the nucleoid. Its function is as follows. Binds to DNA and alters its conformation. May be involved in regulation of gene expression, nucleoid organization and DNA protection. This chain is Nucleoid-associated protein Sama_1311, found in Shewanella amazonensis (strain ATCC BAA-1098 / SB2B).